The sequence spans 680 residues: ATPase family AAA domain-containing protein FIGL1 (680 aa).

Disordered stretches follow at residues 214–234 (YGNS…NQDR), 250–275 (FGTK…GAPN), and 288–352 (VRQK…GGKT). Residues 295-308 (TESPSSCLSPQSDK) show a composition bias toward polar residues. Residues 313 to 323 (RGYGSRSGGLR) are compositionally biased toward gly residues. The segment covering 336–346 (TNGNNVGNLTS) has biased composition (polar residues). ATP is bound by residues A406 and 446 to 451 (GTGKTM).

This sequence belongs to the AAA ATPase family. It depends on Mg(2+) as a cofactor.

Its subcellular location is the nucleus. The catalysed reaction is ATP + H2O = ADP + phosphate + H(+). Involved in DNA double-strand break (DBS) repair via homologous recombination (HR). Limits class II meiotic crossover (CO) formation by regulating the invasion step of meiotic HR. May counteract DMC1 and RAD51-mediated inter-homolog strand invasion to limit CO formation. Functions independently of FANCM. This is ATPase family AAA domain-containing protein FIGL1 from Arabidopsis thaliana (Mouse-ear cress).